The chain runs to 65 residues: VESP-VB1 (65 aa).

A signal peptide spans 1 to 23; sequence MKMSILFLFALIASLACLQLTFA. AXPX repeat units follow at residues 23-26, 27-30, 31-34, 35-38, 39-42, 43-46, and 47-50; these read AAPA, ASPL, ANPG, ASPE, AAPL, ADPL, and ADPF. A propeptide spanning residues 24–49 is cleaved from the precursor; sequence APAASPLANPGASPEAAPLADPLADP. L62 carries the leucine amide modification.

In terms of tissue distribution, expressed by the venom gland.

It localises to the secreted. Its function is as follows. Antimicrobial peptide. Shows activity against both Gram-positive (S.aureus MIC=1.0-3.75 ug/ml) and -negative (E.coli MIC=7.5-15 ug/ml) bacteria, as well against fungi (C.albicans MIC=30 ug/ml). Also promotes important mast cell degranulation. Shows little hemolytic activity on rabbit and human erythrocytes. Its mast cell degranulation activity may be related to the activation of G-protein coupled receptors in mast cells as well as interaction with other proteins located in cell endosomal membranes in the mast cells. In Vespa bicolor (Black shield wasp), this protein is VESP-VB1.